The chain runs to 254 residues: Allene oxide cyclase 4, chloroplastic (254 aa).

A chloroplast-targeting transit peptide spans 1–52 (MIMASSAAASISMITLRNLSRNHQSHQSTFLGFSRSFHNQRISSNSPGLSTR).

It belongs to the allene oxide cyclase family. In terms of tissue distribution, highly expressed in fully developed leaves.

It localises to the plastid. It is found in the chloroplast. The enzyme catalyses (9Z,13S,15Z)-12,13-epoxyoctadeca-9,11,15-trienoate = (9S,13S,15Z)-12-oxophyto-10,15-dienoate. Its function is as follows. Involved in the production of 12-oxo-phytodienoic acid (OPDA), a precursor of jasmonic acid. This Arabidopsis thaliana (Mouse-ear cress) protein is Allene oxide cyclase 4, chloroplastic (AOC4).